The primary structure comprises 381 residues: MSWTVPVVRASQRVSSVGANFLCLGMALCPRQATRIPLNGTWLFTPVSKMATVKSELIERFTSEKPVHHSKVSIIGTGSVGMACAISILLKGLSDELALVDLDEDKLKGETMDLQHGSPFTKMPNIVCSKDYFVTANSNLVIITAGARQEKGETRLNLVQRNVAIFKLMISSIVQYSPHCKLIIVSNPVDILTYVAWKLSAFPKNRIIGSGCNLDTARFRFLIGQKLGIHSESCHGWILGEHGDSSVPVWSGVNIAGVPLKDLNSDIGTDKDPEQWKNVHKEVTATAYEIIKMKGYTSWAIGLSVADLTESILKNLRRIHPVSTIIKGLYGIDEEVFLSIPCILGENGITNLIKIKLTPEEEAHLKKSAKTLWEIQNKLKL.

NAD(+) contacts are provided by residues 101 to 106 and R148; that span reads DLDEDK. Substrate-binding residues include R155, N187, and R218. NAD(+) is bound at residue N187. H242 functions as the Proton acceptor in the catalytic mechanism. Position 297 (T297) interacts with substrate.

The protein belongs to the LDH/MDH superfamily. LDH family. In terms of tissue distribution, testis specific.

It carries out the reaction (S)-lactate + NAD(+) = pyruvate + NADH + H(+). It participates in fermentation; pyruvate fermentation to lactate; (S)-lactate from pyruvate: step 1/1. The polypeptide is L-lactate dehydrogenase A-like 6B (LDHAL6B) (Homo sapiens (Human)).